The following is a 100-amino-acid chain: Small ribosomal subunit protein uS14 (100 aa).

Belongs to the universal ribosomal protein uS14 family. Part of the 30S ribosomal subunit. Contacts proteins S3 and S10.

Functionally, binds 16S rRNA, required for the assembly of 30S particles and may also be responsible for determining the conformation of the 16S rRNA at the A site. This chain is Small ribosomal subunit protein uS14, found in Picosynechococcus sp. (strain ATCC 27264 / PCC 7002 / PR-6) (Agmenellum quadruplicatum).